Reading from the N-terminus, the 365-residue chain is Palmitoyltransferase ZDHHC20 (365 aa).

Topologically, residues 1-14 (MAPCTLWRCCQRTV) are cytoplasmic. A helical membrane pass occupies residues 15 to 35 (GWVPVLFITFVVVWSYYAYVV). At 36 to 53 (ELCVFTLSGNGENGKAVV) the chain is on the lumenal side. Residues 54–74 (YLVAFHLFFVMFVWSYWMTIF) traverse the membrane as a helical segment. Residues 75–169 (TSPASPSKEF…NNCVGFSNYK (95 aa)) lie on the Cytoplasmic side of the membrane. In terms of domain architecture, DHHC spans 126-176 (RYCERCQLIKPDRAHHCSACDMCILKMDHHCPWVNNCVGFSNYKFFLLFLF). Zn(2+) contacts are provided by cysteine 128 and cysteine 131. Residues lysine 135 and 140 to 143 (HHCS) each bind substrate. Zn(2+) is bound by residues histidine 141, cysteine 142, cysteine 145, cysteine 148, and histidine 155. Cysteine 156 (S-palmitoyl cysteine intermediate) is an active-site residue. Cysteine 162 lines the Zn(2+) pocket. A helical transmembrane segment spans residues 170–190 (FFLLFLFYSLLYCLFVATTVL). At 191–207 (QYFIKFWTNELTDTRAK) the chain is on the lumenal side. Residues 208–231 (FHVLFLFFVSTMFFISVLSLLSYH) traverse the membrane as a helical segment. The Cytoplasmic portion of the chain corresponds to 232 to 365 (CWLVGKNRTT…NNHVTVAIEN (134 aa)). Positions 301–365 (PEQASVSNQS…NNHVTVAIEN (65 aa)) are disordered. A compositionally biased stretch (polar residues) spans 302-321 (EQASVSNQSESARSIGSNQP). Residues serine 305 and serine 330 each carry the phosphoserine modification.

The protein belongs to the DHHC palmitoyltransferase family. Post-translationally, autopalmitoylated (in vitro).

The protein localises to the golgi apparatus membrane. The protein resides in the cell membrane. It localises to the cytoplasm. Its subcellular location is the perinuclear region. It is found in the endoplasmic reticulum membrane. The protein localises to the endoplasmic reticulum-Golgi intermediate compartment membrane. The enzyme catalyses L-cysteinyl-[protein] + hexadecanoyl-CoA = S-hexadecanoyl-L-cysteinyl-[protein] + CoA. It carries out the reaction L-cysteinyl-[protein] + tetradecanoyl-CoA = S-tetradecanoyl-L-cysteinyl-[protein] + CoA. It catalyses the reaction L-cysteinyl-[protein] + octadecanoyl-CoA = S-octadecanoyl-L-cysteinyl-[protein] + CoA. In terms of biological role, palmitoyltransferase that could catalyze the addition of palmitate onto various protein substrates. Catalyzes palmitoylation of Cys residues in the cytoplasmic C-terminus of EGFR, and modulates the duration of EGFR signaling by modulating palmitoylation-dependent EGFR internalization and degradation. Has a preference for acyl-CoA with C16 fatty acid chains. Can also utilize acyl-CoA with C14 and C18 fatty acid chains. May palmitoylate CALHM1 subunit of gustatory voltage-gated ion channels and modulate channel gating and kinetics. In Bos taurus (Bovine), this protein is Palmitoyltransferase ZDHHC20.